The primary structure comprises 405 residues: Enoyl-[acyl-carrier-protein] reductase [NADH] (405 aa).

NAD(+)-binding positions include 51–56 (GASSGY), 77–78 (FE), 114–115 (DA), and 142–143 (LA). Tyr228 serves as a coordination point for substrate. Catalysis depends on Tyr238, which acts as the Proton donor. NAD(+)-binding positions include Lys247 and 276–278 (VVT).

Belongs to the TER reductase family. As to quaternary structure, monomer.

The enzyme catalyses a 2,3-saturated acyl-[ACP] + NAD(+) = a (2E)-enoyl-[ACP] + NADH + H(+). Its pathway is lipid metabolism; fatty acid biosynthesis. Functionally, involved in the final reduction of the elongation cycle of fatty acid synthesis (FAS II). Catalyzes the reduction of a carbon-carbon double bond in an enoyl moiety that is covalently linked to an acyl carrier protein (ACP). The polypeptide is Enoyl-[acyl-carrier-protein] reductase [NADH] (Chromohalobacter salexigens (strain ATCC BAA-138 / DSM 3043 / CIP 106854 / NCIMB 13768 / 1H11)).